We begin with the raw amino-acid sequence, 269 residues long: 4-hydroxy-tetrahydrodipicolinate reductase (269 aa).

Residues 11-16 (GASGRM) and E37 each bind NAD(+). R38 serves as a coordination point for NADP(+). NAD(+) is bound by residues 101–103 (GTT) and 125–128 (AGNM). H158 acts as the Proton donor/acceptor in catalysis. H159 is a binding site for (S)-2,3,4,5-tetrahydrodipicolinate. K162 acts as the Proton donor in catalysis. Position 168–169 (168–169 (GT)) interacts with (S)-2,3,4,5-tetrahydrodipicolinate.

This sequence belongs to the DapB family.

The protein resides in the cytoplasm. The enzyme catalyses (S)-2,3,4,5-tetrahydrodipicolinate + NAD(+) + H2O = (2S,4S)-4-hydroxy-2,3,4,5-tetrahydrodipicolinate + NADH + H(+). It carries out the reaction (S)-2,3,4,5-tetrahydrodipicolinate + NADP(+) + H2O = (2S,4S)-4-hydroxy-2,3,4,5-tetrahydrodipicolinate + NADPH + H(+). It functions in the pathway amino-acid biosynthesis; L-lysine biosynthesis via DAP pathway; (S)-tetrahydrodipicolinate from L-aspartate: step 4/4. Its function is as follows. Catalyzes the conversion of 4-hydroxy-tetrahydrodipicolinate (HTPA) to tetrahydrodipicolinate. In Ruegeria sp. (strain TM1040) (Silicibacter sp.), this protein is 4-hydroxy-tetrahydrodipicolinate reductase.